Consider the following 225-residue polypeptide: MHINDWPTDERPREKLLARGAAVLSDAELLAIFVGSGLRGQDAVRTARDLLHRHGPLRCLLDRPAKALARLPGLGPASACKLSAALELANRHLLSDLERGEALSDPSSVGRYFSQRLRARNYEVFAALFLDSRHRAIAFEELFTGTIDAAEIHPREVVRRALLHNAAAVVVGHNHPSGNPEPSEADRAVTQRLLQALGLVDIRLLDHFVIGDGRPVSLAERGWVP.

One can recognise an MPN domain in the interval 102–224 (ALSDPSSVGR…PVSLAERGWV (123 aa)). Zn(2+) is bound by residues H173, H175, and D186. The short motif at 173–186 (HNHPSGNPEPSEAD) is the JAMM motif element.

The protein belongs to the UPF0758 family.

This Xanthomonas campestris pv. campestris (strain 8004) protein is UPF0758 protein XC_3944.